An 84-amino-acid polypeptide reads, in one-letter code: DNA-directed RNA polymerase subunit Rpo5 (84 aa).

This sequence belongs to the archaeal Rpo5/eukaryotic RPB5 RNA polymerase subunit family. As to quaternary structure, part of the 13-subunit RNA polymerase.

It is found in the cytoplasm. It carries out the reaction RNA(n) + a ribonucleoside 5'-triphosphate = RNA(n+1) + diphosphate. In terms of biological role, DNA-dependent RNA polymerase (RNAP) catalyzes the transcription of DNA into RNA using the four ribonucleoside triphosphates as substrates. Reconstitution experiments show this subunit is required for basic activity. The chain is DNA-directed RNA polymerase subunit Rpo5 from Sulfolobus acidocaldarius (strain ATCC 33909 / DSM 639 / JCM 8929 / NBRC 15157 / NCIMB 11770).